The primary structure comprises 326 residues: tRNA-modifying protein YgfZ (326 aa).

Folate is bound by residues W27 and W189.

The protein belongs to the tRNA-modifying YgfZ family.

It is found in the cytoplasm. Functionally, folate-binding protein involved in regulating the level of ATP-DnaA and in the modification of some tRNAs. It is probably a key factor in regulatory networks that act via tRNA modification, such as initiation of chromosomal replication. This chain is tRNA-modifying protein YgfZ, found in Escherichia coli O45:K1 (strain S88 / ExPEC).